We begin with the raw amino-acid sequence, 1369 residues long: MESQLQSIFEEMVKTEIIEEAFAGMFMDTPEDERTKLISCLGAFRQYWSVLPQESHEQCVQWIVKFIHGQHSPKRISFLYDCLAMAVETGLLPPRMVCEALINSDSLEWERTQLWILTFKLIRKIIGGVDYKGVRDLLKVILEKIQTVPDTVSSAVVQQLLAAREVVAYILERNACLLPAYLAVTEVLKLYPEGKLPHWLLGDLVSDFVDSFRPTARIGSICGRCSLLPVVNNSGAICNSWKLDPLTLRFPLKGLLPYDKDLFEPQTALLRYVLEQPYSRDMVCNMLGLNKQHKQRCPVLEDQLVDLVVYAMERSETEEKYDDGGTSQLLWQHLSSQLIFFVLFQFASFPHMVLSLHQKLAGRGLIKGRDHLMWVLLQFISGSIQKNALADFLPVMKLFDLLYPEKECIPVPDITKPQSTHSFAMTCIWIHLNRKAQNDNSKLQIPIPHSLKLHHEFLQQSLRNKSLQMTDYKIALLCNAYSTNSECFTLPMGVLVETIYGNGNVNIPLPGSNCMASGSITPLPMNLLDSLTVHAKMSLIHSIATRVIKMAQAKSTFALAPALVETYSRLLVYMEIESLGIKGFISQLLPTVFKSHAWGILHTLLEMFSYRMHHIQPHYRVQLLSHLHSLAGVPQTNQNQLHLCVESTALRLITALGSSEVQPQFTRFLSDPKTVLSAESEELNRALILTIARATHVTDFFTGSESIQGTWCKDILQTIISFTPHNWALHTLSCFPAPLQAFFKQNNVPQESRFNLKKNVEEEYRKWKSMTNENDIITHFSLQGSPPLFLCLLWKMLLETDQINQIGYRVLERIGARALVAHVRTFADFLVYEFSTSAGGQQLNKCIEMLNDMVWKYNIVTLDRLILCLAMRSHEGNEAQVCYFIIQLLLLKPNDFRNRVSDFVKENSPEHWLQNDWHTKHMNYHKKYPEKLYFEGLAEQVNPPVQIQPQYLPIYFGNVCLRFLPVFDIVIHRFLELIPVSKSLETLLDHLGGLYKFHDRPVTYLYNTLHYYEMQLRDRTNLKRKLVHAIIGSLKDNRPQGWCLSDTYLKFGMNPRDDNPWIPDDTYYCKLIGRLVDTMAGKSPGPFPNCDWRFNEFPNPAAHALHVTCVELMALAVPGKDVGNALLNVVLKSQPLVPRENITAWMNAIGLIITALPEPYWIVLHDRIVNILNSPSLTSETEWVGYPFQLFDFTACHKAYSEMSCSYTLALAHAVWHHSSIGQLSLIPKFLPEVLIPIVKTEYQLLYVYHLIGPFLQRFQQERTRCMIEIGVAFYEMLLNVDQCSTHLSFMDPVCDFLYHMKYMFTGDSIKDQVEKIICNLRPALKLRLRHITHISTESAAPPPPPMNSGSPAPQPNQVPVSVPLTVTQ.

Residues 1337–1369 form a disordered region; it reads TESAAPPPPPMNSGSPAPQPNQVPVSVPLTVTQ. A compositionally biased stretch (pro residues) spans 1341–1357; the sequence is APPPPPMNSGSPAPQPN.

This sequence belongs to the Mediator complex subunit 23 family. Component of the Mediator complex.

The protein resides in the nucleus. Its function is as follows. Component of the Mediator complex, a coactivator involved in the regulated transcription of nearly all RNA polymerase II-dependent genes. Mediator functions as a bridge to convey information from gene-specific regulatory proteins to the basal RNA polymerase II transcription machinery. Mediator is recruited to promoters by direct interactions with regulatory proteins and serves as a scaffold for the assembly of a functional preinitiation complex with RNA polymerase II and the general transcription factors. This is Mediator of RNA polymerase II transcription subunit 23 (med23) from Xenopus laevis (African clawed frog).